We begin with the raw amino-acid sequence, 63 residues long: Large ribosomal subunit protein bL35 (63 aa).

Residues 1–15 (MPKIKTHRGAAKRFK) show a composition bias toward basic residues. Positions 1–26 (MPKIKTHRGAAKRFKQTAGGKWKGSH) are disordered.

It belongs to the bacterial ribosomal protein bL35 family.

The protein is Large ribosomal subunit protein bL35 of Pelotomaculum thermopropionicum (strain DSM 13744 / JCM 10971 / SI).